The chain runs to 298 residues: Nucleotide-binding protein GK3066 (298 aa).

Residue 17 to 24 (GMSGAGKT) coordinates ATP. GTP is bound at residue 68-71 (DLRS).

It belongs to the RapZ-like family.

Functionally, displays ATPase and GTPase activities. The polypeptide is Nucleotide-binding protein GK3066 (Geobacillus kaustophilus (strain HTA426)).